A 708-amino-acid chain; its full sequence is MEANHQRNDLGLVALTMLAQYHNISLNPEEIKHKFDLDGKGLSLTAWLLAAKSLALKAKHIKKEISRLHLVNLPALVWQDNGKHFLLVKVDTDNNRYLTYNLEQDAPQILSQDEFEACYQGQLILVTSRASVVGQLAKFDFTWFIPAVIKYRKIFLETLIVSIFLQIFALITPLFFQVVMDKVLVHRGFSTLNIITVALAIVIIFEIVLSGLRTYVFSHSTSRIDVELGAKLFRHLLSLPISYFENRRVGDTVARVRELDQIRNFLTGQALTSVLDLLFSFIFFAVMWYYSPKLTLVILGSLPCYILWSIFISPILRRRLDEKFARSADNQAFLVESVTAINMIKAMAVAPQMTDTWDKQLASYVSSSFRVTVLATIGQQGVQLIQKTVMVINLWLGAHLVISGDLSIGQLIAFNMLSGQVIAPVIRLAQLWQDFQQVGISVTRLGDVLNSPTEQYQGKLSLPEIKGDISFKNIRFRYKPDAPTILNNVNLEIRQGEVIGIVGRSGSGKSTLTKLLQRFYIPENGQVLIDGHDLALADPNWLRRQIGVVLQDNVLLNRSIRENIALSDPGMPMERVIYAAKLAGAHDFISELREGYNTIVGEQGAGLSGGQRQRIAIARALVNNPKILIFDEATSALDYESEHIIMQNMQKICQGRTVILIAHRLSTVKNADRIIVMEKGEIVEQGKHHELLQNSNGLYSYLHQLQLN.

The Peptidase C39 domain maps to 1–126; it reads MEANHQRNDL…ACYQGQLILV (126 aa). The ABC transmembrane type-1 domain maps to 155–437; that stretch reads FLETLIVSIF…LAQLWQDFQQ (283 aa). The next 5 membrane-spanning stretches (helical) occupy residues 159–179, 192–212, 270–290, 296–316, and 389–409; these read LIVS…FQVV, LNII…LSGL, ALTS…MWYY, LVIL…SPIL, and VMVI…LSIG. Positions 469–704 constitute an ABC transporter domain; it reads ISFKNIRFRY…SNGLYSYLHQ (236 aa). An ATP-binding site is contributed by 503–510; that stretch reads GRSGSGKS.

The protein belongs to the ABC transporter superfamily. Protein-1 exporter (TC 3.A.1.109) family. In terms of assembly, homodimer.

The protein resides in the cell inner membrane. The enzyme catalyses ATP + H2O + proteinSide 1 = ADP + phosphate + proteinSide 2.. Functionally, part of the ABC transporter complex LktBD involved in leukotoxin export. Transmembrane domains (TMD) form a pore in the inner membrane and the ATP-binding domain (NBD) is responsible for energy generation. The protein is Leukotoxin translocation ATP-binding protein LktB (lktB) of Mannheimia haemolytica (Pasteurella haemolytica).